The sequence spans 289 residues: Urease accessory protein UreD (289 aa).

The protein belongs to the UreD family. UreD, UreF and UreG form a complex that acts as a GTP-hydrolysis-dependent molecular chaperone, activating the urease apoprotein by helping to assemble the nickel containing metallocenter of UreC. The UreE protein probably delivers the nickel.

The protein resides in the cytoplasm. Required for maturation of urease via the functional incorporation of the urease nickel metallocenter. The sequence is that of Urease accessory protein UreD from Cupriavidus necator (strain ATCC 17699 / DSM 428 / KCTC 22496 / NCIMB 10442 / H16 / Stanier 337) (Ralstonia eutropha).